An 882-amino-acid chain; its full sequence is Valine--tRNA ligase (882 aa).

Residues 42 to 52 carry the 'HIGH' region motif; it reads PNVTGKLHLGH. Residues 522–526 carry the 'KMSKS' region motif; sequence KMSKS. ATP is bound at residue K525. Positions 849–873 form a coiled coil; the sequence is KIEIEKKKYESYCKQYKKLLESKNN.

Belongs to the class-I aminoacyl-tRNA synthetase family. ValS type 1 subfamily. In terms of assembly, monomer.

The protein localises to the cytoplasm. The catalysed reaction is tRNA(Val) + L-valine + ATP = L-valyl-tRNA(Val) + AMP + diphosphate. Functionally, catalyzes the attachment of valine to tRNA(Val). As ValRS can inadvertently accommodate and process structurally similar amino acids such as threonine, to avoid such errors, it has a 'posttransfer' editing activity that hydrolyzes mischarged Thr-tRNA(Val) in a tRNA-dependent manner. The sequence is that of Valine--tRNA ligase from Onion yellows phytoplasma (strain OY-M).